The chain runs to 160 residues: MERVSGLLSWTLSRFLWLSGLSEPGAARQPRIMEEKALEVYDLIRTIRDPEKPNTLEELEVVTESCVEVQEINEDDYLVIIRFTPTVPHCSLATLIGLCLRVKLQRCLPFKHKLEIYISEGTHSTEEDINKQINDKERVAAAMENPNLREIVEQCVLEPD.

Residues histidine 89, histidine 123, glutamate 150, and glutamate 153 each contribute to the Zn(2+) site.

Belongs to the MIP18 family. In terms of assembly, monomer and homodimer. Component of the CIA complex. Interacts with CIAO1. Interacts with IREB2. Interacts with APAF1.

Its subcellular location is the cytoplasm. Functionally, component of the cytosolic iron-sulfur protein assembly (CIA) complex, a multiprotein complex that mediates the incorporation of iron-sulfur cluster into extramitochondrial Fe/S proteins. As a CIA complex component and in collaboration with CIAO1 specifically matures ACO1 and stabilizes IREB2, connecting cytosolic iron-sulfur protein maturation with cellular iron regulation. May play a role in chromosome segregation through establishment of sister chromatid cohesion. May induce apoptosis in collaboration with APAF1. This chain is Cytosolic iron-sulfur assembly component 2A, found in Bos taurus (Bovine).